The primary structure comprises 334 residues: S-adenosylmethionine:tRNA ribosyltransferase-isomerase (334 aa).

The protein belongs to the QueA family. As to quaternary structure, monomer.

It is found in the cytoplasm. It carries out the reaction 7-aminomethyl-7-carbaguanosine(34) in tRNA + S-adenosyl-L-methionine = epoxyqueuosine(34) in tRNA + adenine + L-methionine + 2 H(+). It functions in the pathway tRNA modification; tRNA-queuosine biosynthesis. Transfers and isomerizes the ribose moiety from AdoMet to the 7-aminomethyl group of 7-deazaguanine (preQ1-tRNA) to give epoxyqueuosine (oQ-tRNA). The polypeptide is S-adenosylmethionine:tRNA ribosyltransferase-isomerase (Thermosipho melanesiensis (strain DSM 12029 / CIP 104789 / BI429)).